An 819-amino-acid polypeptide reads, in one-letter code: Ribosome-releasing factor 2, mitochondrial (819 aa).

Residues M1–Y30 constitute a mitochondrion transit peptide. In terms of domain architecture, tr-type G spans S39 to I327. GTP-binding positions include A48 to T55, D113 to H117, and N165 to D168.

The protein belongs to the TRAFAC class translation factor GTPase superfamily. Classic translation factor GTPase family. EF-G/EF-2 subfamily.

The protein resides in the mitochondrion. Functionally, mitochondrial GTPase that mediates the disassembly of ribosomes from messenger RNA at the termination of mitochondrial protein biosynthesis. Not involved in the GTP-dependent ribosomal translocation step during translation elongation. This is Ribosome-releasing factor 2, mitochondrial from Saccharomyces cerevisiae (strain RM11-1a) (Baker's yeast).